Consider the following 819-residue polypeptide: Leucine--tRNA ligase (819 aa).

Positions 42–52 (PYPSGRLHMGH) match the 'HIGH' region motif. A 'KMSKS' region motif is present at residues 577–581 (KMSKS). Lys580 provides a ligand contact to ATP.

The protein belongs to the class-I aminoacyl-tRNA synthetase family.

It is found in the cytoplasm. It carries out the reaction tRNA(Leu) + L-leucine + ATP = L-leucyl-tRNA(Leu) + AMP + diphosphate. The protein is Leucine--tRNA ligase of Saccharophagus degradans (strain 2-40 / ATCC 43961 / DSM 17024).